The primary structure comprises 265 residues: GTP cyclohydrolase 1 type 2 homolog (265 aa).

A divalent metal cation-binding residues include histidine 65, aspartate 103, histidine 225, and glutamate 228.

It belongs to the GTP cyclohydrolase I type 2/NIF3 family. In terms of assembly, homohexamer.

The polypeptide is GTP cyclohydrolase 1 type 2 homolog (Streptococcus pneumoniae serotype 4 (strain ATCC BAA-334 / TIGR4)).